The following is an 83-amino-acid chain: Defensin-like protein 47 (83 aa).

A signal peptide spans 1–27; the sequence is MGSTKTLVTCFLVIILAVSLPNNNVLA. 4 cysteine pairs are disulfide-bonded: cysteine 40–cysteine 81, cysteine 44–cysteine 68, cysteine 53–cysteine 79, and cysteine 57–cysteine 80.

The protein belongs to the DEFL family.

It localises to the secreted. The polypeptide is Defensin-like protein 47 (Arabidopsis thaliana (Mouse-ear cress)).